We begin with the raw amino-acid sequence, 889 residues long: Valine--tRNA ligase (889 aa).

Positions 50–60 match the 'HIGH' region motif; sequence PNVTGKLHLGH. The 'KMSKS' region signature appears at 532 to 536; sequence KMSKS. Residue Lys-535 participates in ATP binding. The stretch at 816 to 889 forms a coiled coil; it reads LAELVDLDEE…QRLVDIKAEA (74 aa).

Belongs to the class-I aminoacyl-tRNA synthetase family. ValS type 1 subfamily. As to quaternary structure, monomer.

It localises to the cytoplasm. It carries out the reaction tRNA(Val) + L-valine + ATP = L-valyl-tRNA(Val) + AMP + diphosphate. Functionally, catalyzes the attachment of valine to tRNA(Val). As ValRS can inadvertently accommodate and process structurally similar amino acids such as threonine, to avoid such errors, it has a 'posttransfer' editing activity that hydrolyzes mischarged Thr-tRNA(Val) in a tRNA-dependent manner. The chain is Valine--tRNA ligase from Lactiplantibacillus plantarum (strain ATCC BAA-793 / NCIMB 8826 / WCFS1) (Lactobacillus plantarum).